A 676-amino-acid chain; its full sequence is E3 ubiquitin-protein ligase ICP0 (676 aa).

The RING-type zinc finger occupies 13-52 (CCICLDAITGAARALPCLHAFCLACIRRWLEGRPTCPLCK). Disordered stretches follow at residues 101–135 (DLTAADGEAPGAGGEAGAAGGSEAGGGAGGAEAAG), 266–486 (HLIP…PAPI), and 555–676 (AAIS…AWRQ). Over residues 110–135 (PGAGGEAGAAGGSEAGGGAGGAEAAG) the composition is skewed to gly residues. The segment covering 286 to 303 (SDSDSEGSEDDSWSESEE) has biased composition (acidic residues). Low complexity predominate over residues 304–314 (SSSGLSTSDLT). Acidic residues predominate over residues 315–328 (AIDDTETEPETDAE). Polar residues predominate over residues 351 to 361 (YVSTRGRQTPA). 2 stretches are compositionally biased toward low complexity: residues 375–388 (GRAAAVSAPPSSRS) and 397–411 (LPAAPRAAPAAQARA). Positions 422–439 (GAGLGVAAGETAGWGVGS) are enriched in gly residues. Over residues 440 to 450 (EEGRGERRAKL) the composition is skewed to basic and acidic residues. Pro residues predominate over residues 474 to 484 (TPAPAPAPAPA). Positions 555 to 597 (AAISTRAPTPSPAGRAPAADPRRAGAPALAGAARAEAGRNGNP) are enriched in low complexity.

Auto-ubiquitinated. In terms of processing, the strongly acidic region might serve as a transcriptional activation domain, possibly regulated through phosphorylation by casein kinase II.

The catalysed reaction is S-ubiquitinyl-[E2 ubiquitin-conjugating enzyme]-L-cysteine + [acceptor protein]-L-lysine = [E2 ubiquitin-conjugating enzyme]-L-cysteine + N(6)-ubiquitinyl-[acceptor protein]-L-lysine.. Functionally, evades nuclear antiviral defenses triggered by dsDNA viruses. Acts during the initial stages of lytic infection and the reactivation of latent viral genome. Prevents the antiviral effect of nuclear bodies by degrading host PML and SP100. The sequence is that of E3 ubiquitin-protein ligase ICP0 (BICP0) from Bos taurus (Bovine).